A 410-amino-acid polypeptide reads, in one-letter code: Diguanylate cyclase DgcM (410 aa).

2 consecutive PAS domains span residues 3–70 (THNF…NQHD) and 129–198 (GFYA…HLPG). Residues 199-251 (GHKPLNFIHKLADGSTRHVQTYAGPIEIYGDKLMLCIVHDITEQKRLEEQLEH) form the PAC domain. The 128-residue stretch at 283-410 (QDYSLLLIDT…NDGRNRVLAA (128 aa)) folds into the GGDEF domain. Residue Asp-291 coordinates Mg(2+). Substrate contacts are provided by Asn-299, His-304, and Asp-308. A Mg(2+)-binding site is contributed by Glu-334. The active-site Proton acceptor is the Glu-334.

It depends on Mg(2+) as a cofactor.

It catalyses the reaction 2 GTP = 3',3'-c-di-GMP + 2 diphosphate. It functions in the pathway purine metabolism; 3',5'-cyclic di-GMP biosynthesis. In terms of biological role, part of a signaling cascade that regulates curli biosynthesis. The cascade is composed of two cyclic-di-GMP (c-di-GMP) control modules, in which c-di-GMP controlled by the DgcE/PdeH pair (module I) regulates the activity of the DgcM/PdeR pair (module II), which in turn regulates activity of the transcription factor MlrA and expression of the master biofilm regulator csgD. In Escherichia coli O157:H7, this protein is Diguanylate cyclase DgcM.